The following is a 296-amino-acid chain: Nucleotide-binding protein M28_Spy0517 (296 aa).

Position 13–20 (13–20 (GMSGAGKT)) interacts with ATP. 63 to 66 (DMRS) serves as a coordination point for GTP.

Belongs to the RapZ-like family.

In terms of biological role, displays ATPase and GTPase activities. The sequence is that of Nucleotide-binding protein M28_Spy0517 from Streptococcus pyogenes serotype M28 (strain MGAS6180).